The chain runs to 411 residues: Lissencephaly-1 homolog (411 aa).

One can recognise a LisH domain in the interval 9-41 (QREELNQAIADYLGSNGYADSLETFRKEADLST). Residues 56 to 83 (TSVIRLQKKVMDLEAKLTEAEKEVIEGA) are a coiled coil. 7 WD repeats span residues 106-147 (GHRA…RSLK), 148-187 (GHTD…ECVK), 191-230 (GHDH…CVKT), 233-272 (GHRE…CKVE), 275-334 (DHEH…CLLT), 337-376 (GHDN…CMKT), and 379-411 (AHQH…WECR).

The protein belongs to the WD repeat LIS1/nudF family.

It localises to the cytoplasm. It is found in the cytoskeleton. The protein localises to the microtubule organizing center. The protein resides in the centrosome. Its function is as follows. Positively regulates the activity of the minus-end directed microtubule motor protein dynein. May enhance dynein-mediated microtubule sliding by targeting dynein to the microtubule plus end. Required for several dynein- and microtubule-dependent processes. In Drosophila mojavensis (Fruit fly), this protein is Lissencephaly-1 homolog.